A 113-amino-acid chain; its full sequence is Mitochondrial import inner membrane translocase subunit TIM14 (113 aa).

At 1-4 (MATP) the chain is on the mitochondrial intermembrane side. A helical transmembrane segment spans residues 5–22 (IIVGATIAGIAYSSRFLI). At 23–113 (RVIQRAKSKQ…RNVLSSKNSN (91 aa)) the chain is on the mitochondrial matrix side. In terms of domain architecture, J spans 59 to 113 (EAANILGLKEESTKEEIKIRHKLLMIKNHPDKGGSSYLATKINEARNVLSSKNSN).

The protein belongs to the TIM14 family. In terms of assembly, interacts with PHB2; the interaction associates DNAJC19 with the prohibitin complex. Interacts with TIMM16/PAM16. May be a component of the PAM complex at least composed of a mitochondrial HSP70 protein, GRPEL1 or GRPEL2, TIMM44, TIMM16/PAM16 and TIMM14/DNAJC19.

Its subcellular location is the mitochondrion inner membrane. Its function is as follows. Mitochondrial co-chaperone which forms a complex with prohibitins to regulate cardiolipin remodeling. May be a component of the PAM complex, a complex required for the translocation of transit peptide-containing proteins from the inner membrane into the mitochondrial matrix in an ATP-dependent manner. May act as a co-chaperone that stimulate the ATP-dependent activity. This is Mitochondrial import inner membrane translocase subunit TIM14 (dnajc19) from Dictyostelium discoideum (Social amoeba).